A 336-amino-acid chain; its full sequence is Ketol-acid reductoisomerase (NADP(+)) (336 aa).

The 181-residue stretch at 2-182 folds into the KARI N-terminal Rossmann domain; the sequence is AKIYYQQDCN…GGARAGVLET (181 aa). NADP(+)-binding positions include 25 to 28, Ser51, Ser53, and 83 to 86; these read YGSQ and DEKQ. His108 is an active-site residue. Gly134 provides a ligand contact to NADP(+). A KARI C-terminal knotted domain is found at 183–328; it reads TFREETETDL…AELRGLMSWT (146 aa). Residues Asp191, Glu195, Glu227, and Glu231 each coordinate Mg(2+). Ser252 lines the substrate pocket.

It belongs to the ketol-acid reductoisomerase family. It depends on Mg(2+) as a cofactor.

The catalysed reaction is (2R)-2,3-dihydroxy-3-methylbutanoate + NADP(+) = (2S)-2-acetolactate + NADPH + H(+). The enzyme catalyses (2R,3R)-2,3-dihydroxy-3-methylpentanoate + NADP(+) = (S)-2-ethyl-2-hydroxy-3-oxobutanoate + NADPH + H(+). The protein operates within amino-acid biosynthesis; L-isoleucine biosynthesis; L-isoleucine from 2-oxobutanoate: step 2/4. It functions in the pathway amino-acid biosynthesis; L-valine biosynthesis; L-valine from pyruvate: step 2/4. Involved in the biosynthesis of branched-chain amino acids (BCAA). Catalyzes an alkyl-migration followed by a ketol-acid reduction of (S)-2-acetolactate (S2AL) to yield (R)-2,3-dihydroxy-isovalerate. In the isomerase reaction, S2AL is rearranged via a Mg-dependent methyl migration to produce 3-hydroxy-3-methyl-2-ketobutyrate (HMKB). In the reductase reaction, this 2-ketoacid undergoes a metal-dependent reduction by NADPH to yield (R)-2,3-dihydroxy-isovalerate. This is Ketol-acid reductoisomerase (NADP(+)) from Lachnoclostridium phytofermentans (strain ATCC 700394 / DSM 18823 / ISDg) (Clostridium phytofermentans).